We begin with the raw amino-acid sequence, 611 residues long: Putative clathrin assembly protein At4g02650 (611 aa).

Residues 26–162 (GRSSSLTELE…DYRMQGRRGK (137 aa)) form the ENTH domain. Disordered regions lie at residues 158-184 (GRRGKKKSGGGGGGDGDSGEEDDHRGT) and 337-406 (TTKS…GDLL). Basic and acidic residues predominate over residues 386-401 (METKKDVEEVVSRQDQ).

It localises to the membrane. Its subcellular location is the clathrin-coated pit. The protein localises to the golgi apparatus. The protein resides in the cytoplasmic vesicle. It is found in the clathrin-coated vesicle. This Arabidopsis thaliana (Mouse-ear cress) protein is Putative clathrin assembly protein At4g02650.